The sequence spans 944 residues: 2-oxoglutarate dehydrogenase E1 component (944 aa).

The segment at 914–944 (RRRRSSPAEGDPTVHKKEQERIVSDSLTRKN) is disordered. The span at 925–936 (PTVHKKEQERIV) shows a compositional bias: basic and acidic residues.

It belongs to the alpha-ketoglutarate dehydrogenase family. As to quaternary structure, homodimer. Part of the 2-oxoglutarate dehydrogenase (OGDH) complex composed of E1 (2-oxoglutarate dehydrogenase), E2 (dihydrolipoamide succinyltransferase) and E3 (dihydrolipoamide dehydrogenase); the complex contains multiple copies of the three enzymatic components (E1, E2 and E3). Requires thiamine diphosphate as cofactor.

It carries out the reaction N(6)-[(R)-lipoyl]-L-lysyl-[protein] + 2-oxoglutarate + H(+) = N(6)-[(R)-S(8)-succinyldihydrolipoyl]-L-lysyl-[protein] + CO2. Its function is as follows. E1 component of the 2-oxoglutarate dehydrogenase (OGDH) complex which catalyzes the decarboxylation of 2-oxoglutarate, the first step in the conversion of 2-oxoglutarate to succinyl-CoA and CO(2). This chain is 2-oxoglutarate dehydrogenase E1 component, found in Bacillus subtilis (strain 168).